The sequence spans 315 residues: Ribosomal RNA small subunit methyltransferase H (315 aa).

Residues 36–38 (GGH), aspartate 56, phenylalanine 80, aspartate 102, and glutamine 109 contribute to the S-adenosyl-L-methionine site.

The protein belongs to the methyltransferase superfamily. RsmH family.

Its subcellular location is the cytoplasm. It catalyses the reaction cytidine(1402) in 16S rRNA + S-adenosyl-L-methionine = N(4)-methylcytidine(1402) in 16S rRNA + S-adenosyl-L-homocysteine + H(+). In terms of biological role, specifically methylates the N4 position of cytidine in position 1402 (C1402) of 16S rRNA. The sequence is that of Ribosomal RNA small subunit methyltransferase H from Proteus mirabilis (strain HI4320).